We begin with the raw amino-acid sequence, 650 residues long: MQKSLITTPIYYVNDIPHIGHAYTTLIADTLKKYYTLQGEEVFFLTGTDEHGQKIEQSARLRNQSPKAYADSISTIFKDQWDFFNLDYDGFIRTTDSEHQKCVQNAFEIMFEKGDIYKGAYSGYYCVSCESYCAISKADNTNDKVLCPDCLRETTLLEEESYFFRLSAYEKPLLDFYAKNPEAILPVYRKNEVTSFIEQGLLDLSITRTSFEWGIPLPKKMNDPKHVVYVWLDALLNYASALGYLNDLDNKMAHFECARHIVGKDILRFHAIYWPAFLMSLNLPLFKQLCVHGWWTIEGVKMSKSLGNVLDAQKIAMEYGIEELRYFLLREVPFGQDGDFSKKALIERINANLNNDLGNLLNRLLGMAKKYFNHSLKSTKITAYYSKELEKVHQILDNANSFVPKMQLHKALEELFNVYDFLNKLIAKEEPWVLHKNNESEKLEALLSLIANALLQSSFLLYAFMPKSAVKLANAFNTEITPDNYERFFKAKKLQDMILQDTEPLFSKMEKIEKTEKAGEASPEKNEKEKKDAKEKAPLKQENYIGIEDFKKVEIKVGLIKEAQRIEKSNKLLRLKVDLGEGRLRQIISGIALDYEPESLVGQMVCVVANLKPAKLMGEMSEGMILAVRDSDNLALISPTREKIAGSLIS.

The 'HIGH' region motif lies at 11–21 (YYVNDIPHIGH). Zn(2+) is bound by residues Cys126, Cys129, Cys147, and Cys150. The 'KMSKS' region signature appears at 301–305 (KMSKS). Lys304 contacts ATP. The segment at 513–535 (EKTEKAGEASPEKNEKEKKDAKE) is disordered. Residues 549–650 (DFKKVEIKVG…REKIAGSLIS (102 aa)) form the tRNA-binding domain.

This sequence belongs to the class-I aminoacyl-tRNA synthetase family. MetG type 2A subfamily. Homodimer. Zn(2+) is required as a cofactor.

The protein resides in the cytoplasm. The enzyme catalyses tRNA(Met) + L-methionine + ATP = L-methionyl-tRNA(Met) + AMP + diphosphate. Is required not only for elongation of protein synthesis but also for the initiation of all mRNA translation through initiator tRNA(fMet) aminoacylation. This Helicobacter pylori (strain ATCC 700392 / 26695) (Campylobacter pylori) protein is Methionine--tRNA ligase (metG).